The sequence spans 78 residues: uncharacterized protein (78 aa).

The helical transmembrane segment at 13–33 threads the bilayer; the sequence is STILILLMSVLILLLSIDILA.

The protein resides in the membrane. This is an uncharacterized protein from Methanocaldococcus jannaschii (strain ATCC 43067 / DSM 2661 / JAL-1 / JCM 10045 / NBRC 100440) (Methanococcus jannaschii).